A 299-amino-acid chain; its full sequence is Transcription termination/antitermination protein NusG (299 aa).

Residues Asp30–Asp96 are disordered. A run of 2 repeats spans residues Glu46–Ala49 and Glu70–Ala73. The interval Glu46–Ala87 is 4 X 4 AA repeats of E-E-A-A. The span at Ser54–Ala87 shows a compositional bias: acidic residues. One copy of the 3; approximate repeat lies at Glu80 to Ala83. The stretch at Glu84–Ala87 is repeat 4. The 29-residue stretch at Val248–Val276 folds into the KOW domain.

The protein belongs to the NusG family. Post-translationally, the N-terminus is blocked.

In terms of biological role, participates in transcription elongation, termination and antitermination. This Streptomyces virginiae (Streptomyces cinnamonensis) protein is Transcription termination/antitermination protein NusG.